Consider the following 335-residue polypeptide: Homeobox protein DBX1 (335 aa).

Disordered regions lie at residues Ile58–Ala102 and Lys240–Ser335. A compositionally biased stretch (low complexity) spans Gly83–Pro95. Positions Gly181–Lys240 form a DNA-binding region, homeobox. Residues Gly299–Phe317 show a composition bias toward low complexity. The span at Ser318–Ser335 shows a compositional bias: acidic residues.

It belongs to the H2.0 homeobox family.

The protein resides in the nucleus. In terms of biological role, could have a role in patterning the central nervous system during embryogenesis. Has a key role in regulating the distinct phenotypic features that distinguish two major classes of ventral interneurons, V0 and V1 neurons. Regulates the transcription factor profile, neurotransmitter phenotype, intraspinal migratory path and axonal trajectory of V0 neurons, features that differentiate them from an adjacent set of V1 neurons. The protein is Homeobox protein DBX1 (Dbx1) of Mus musculus (Mouse).